A 188-amino-acid chain; its full sequence is GMP synthase [glutamine-hydrolyzing] subunit A (188 aa).

Residues 1-188 enclose the Glutamine amidotransferase type-1 domain; it reads MIVILDNGGQ…FCKVCGYKFE (188 aa). The Nucleophile role is filled by cysteine 76. Active-site residues include histidine 163 and glutamate 165.

Heterodimer composed of a glutamine amidotransferase subunit (A) and a GMP-binding subunit (B).

The catalysed reaction is XMP + L-glutamine + ATP + H2O = GMP + L-glutamate + AMP + diphosphate + 2 H(+). It functions in the pathway purine metabolism; GMP biosynthesis; GMP from XMP (L-Gln route): step 1/1. Catalyzes the synthesis of GMP from XMP. This chain is GMP synthase [glutamine-hydrolyzing] subunit A, found in Methanocaldococcus jannaschii (strain ATCC 43067 / DSM 2661 / JAL-1 / JCM 10045 / NBRC 100440) (Methanococcus jannaschii).